A 228-amino-acid chain; its full sequence is Protein TIFY 10a (228 aa).

One can recognise a Tify domain in the interval 75-110; that stretch reads REQEKRQLTIFYGGKVLVFDDFPAEKAKDLMQMASK. Residues 164–189 carry the Jas motif; that stretch reads PQARKASLHRFLEKRKDRLQAKAPYQ. The Nuclear localization signal signature appears at 166 to 173; sequence ARKASLHR. The interval 175-228 is disordered; that stretch reads LEKRKDRLQAKAPYQGSPSDASPVKKELQESQPWLGLGPQVAAPDLSLRQESSQ.

It belongs to the TIFY/JAZ family. Interacts with COI1A and COI1B in a coronatine-dependent manner. Coronatine is an analog of jasmonoyl isoleucine (JA-Ile). In terms of processing, ubiquitinated. Targeted for degradation by the SCF(COI1) E3 ubiquitin ligase-proteasome pathway during jasmonate signaling.

The protein localises to the nucleus. Functionally, repressor of jasmonate responses. The polypeptide is Protein TIFY 10a (Oryza sativa subsp. japonica (Rice)).